Reading from the N-terminus, the 465-residue chain is Asparagine--tRNA ligase (465 aa).

The protein belongs to the class-II aminoacyl-tRNA synthetase family. In terms of assembly, homodimer.

The protein resides in the cytoplasm. The catalysed reaction is tRNA(Asn) + L-asparagine + ATP = L-asparaginyl-tRNA(Asn) + AMP + diphosphate + H(+). The protein is Asparagine--tRNA ligase of Hahella chejuensis (strain KCTC 2396).